Reading from the N-terminus, the 325-residue chain is 5-dehydro-2-deoxygluconokinase (325 aa).

The protein belongs to the carbohydrate kinase PfkB family.

The catalysed reaction is 5-dehydro-2-deoxy-D-gluconate + ATP = 6-phospho-5-dehydro-2-deoxy-D-gluconate + ADP + H(+). It participates in polyol metabolism; myo-inositol degradation into acetyl-CoA; acetyl-CoA from myo-inositol: step 5/7. Functionally, catalyzes the phosphorylation of 5-dehydro-2-deoxy-D-gluconate (2-deoxy-5-keto-D-gluconate or DKG) to 6-phospho-5-dehydro-2-deoxy-D-gluconate (DKGP). In Listeria monocytogenes serotype 4b (strain CLIP80459), this protein is 5-dehydro-2-deoxygluconokinase.